The sequence spans 445 residues: Exodeoxyribonuclease 7 large subunit (445 aa).

The protein belongs to the XseA family. Heterooligomer composed of large and small subunits.

Its subcellular location is the cytoplasm. It carries out the reaction Exonucleolytic cleavage in either 5'- to 3'- or 3'- to 5'-direction to yield nucleoside 5'-phosphates.. In terms of biological role, bidirectionally degrades single-stranded DNA into large acid-insoluble oligonucleotides, which are then degraded further into small acid-soluble oligonucleotides. The sequence is that of Exodeoxyribonuclease 7 large subunit from Shewanella halifaxensis (strain HAW-EB4).